Reading from the N-terminus, the 287-residue chain is MAVLAPLLAVLYAAPGLLRWVSQPYYLISALLSASFLLVRKVPPACSVLPTQREDGNPCDFDWREVEILMFLSAIVMMKNRRSITVEQHIGNIFMFSKVANTILFFRLDLRMGLLYITLCIVFLMTCKPPLYLGPEHIKYFSDKTLEEEMQSDGRVSWIVEFFANWSSECQSFAPIYAELSLKYNCAGLKFGKVDIGRYPEVSCRYSISPSPLSKQLPTLILFQGGREVFRRPQVDKKGRAVSWSFTQENVIREFNLNELYLKAKKIRKHQEESIHENEWNDGKKDQ.

Positions 1 to 13 (MAVLAPLLAVLYA) are cleaved as a signal peptide. Residues 14–112 (APGLLRWVSQ…ILFFRLDLRM (99 aa)) lie on the Extracellular side of the membrane. A helical transmembrane segment spans residues 113–133 (GLLYITLCIVFLMTCKPPLYL). Residues 134 to 287 (GPEHIKYFSD…NEWNDGKKDQ (154 aa)) are Cytoplasmic-facing. A Thioredoxin domain is found at 137–209 (HIKYFSDKTL…PEVSCRYSIS (73 aa)). Residues 284–287 (KKDQ) carry the Di-lysine motif motif.

Monomer. Homodimer; disulfide-linked. Occurs in both reduced and oxidized monomeric form. Oxidative conditions increase homodimerization.

The protein localises to the endoplasmic reticulum membrane. Its subcellular location is the mitochondrion membrane. Functionally, endoplasmic reticulum and mitochondria-associated protein that probably functions as a regulator of cellular redox state and thereby regulates protein post-translational modification, protein folding and mitochondrial activity. The protein is Thioredoxin-related transmembrane protein 2 (tmx2) of Xenopus laevis (African clawed frog).